The chain runs to 108 residues: C-C motif chemokine 19 (108 aa).

A signal peptide spans 1–25 (MAPRVTPLLAFSLLVLWTFPAPTLG). Disulfide bonds link Cys33–Cys59 and Cys34–Cys75. N-linked (GlcNAc...) asparagine glycosylation occurs at Asn100.

This sequence belongs to the intercrine beta (chemokine CC) family. In terms of assembly, interacts with TNFAIP6 (via Link domain). In terms of tissue distribution, highly expressed by dendritic cells in mesenteric and peripheral lymph nodes. Significant expression in spleen (T cell zone or periarteriolar lymphatic sheath) and Peyer patches. Low expression in thymus.

Its subcellular location is the secreted. Functionally, strongly chemotactic for naive (L-selectinhi) CD4 T-cells and for CD8 T-cells and weakly attractive for resting B-cells and memory (L-selectinlo) CD4 T-cells. May play a role in promoting encounters between recirculating T-cells and dendritic cells and in the migration of activated B-cells into the T-zone of secondary lymphoid tissues. Binds to chemokine receptor CCR7. Binds to atypical chemokine receptor ACKR4 and mediates the recruitment of beta-arrestin (ARRB1/2) to ACKR4. The polypeptide is C-C motif chemokine 19 (Ccl19) (Mus musculus (Mouse)).